Consider the following 100-residue polypeptide: Protamine-2 (100 aa).

The interval 1–45 (MVRYHVRSPSERPHREYRQLVNGQEQGRHGQEEQGMSAEGVEGYG) is disordered. Residues serine 8, serine 10, and serine 37 each carry the phosphoserine modification. A compositionally biased stretch (basic and acidic residues) spans 8–18 (SPSERPHREYR).

Belongs to the protamine P2 family. As to quaternary structure, interacts with TDRP. Post-translationally, proteolytic processing into mature chains is required for histone eviction during spermatogenesis. Transition proteins (TNP1 and TNP2) are required for processing. Testis.

It localises to the nucleus. It is found in the chromosome. Functionally, protamines substitute for histones in the chromatin of sperm during the haploid phase of spermatogenesis. They compact sperm DNA into a highly condensed, stable and inactive complex. In Alouatta seniculus (Red howler monkey), this protein is Protamine-2 (PRM2).